The chain runs to 307 residues: Putative S-adenosyl-L-methionine-dependent methyltransferase MUL_4430 (307 aa).

S-adenosyl-L-methionine is bound by residues Asp128 and 157–158 (DL).

Belongs to the UPF0677 family.

In terms of biological role, exhibits S-adenosyl-L-methionine-dependent methyltransferase activity. The polypeptide is Putative S-adenosyl-L-methionine-dependent methyltransferase MUL_4430 (Mycobacterium ulcerans (strain Agy99)).